Consider the following 753-residue polypeptide: Polyribonucleotide nucleotidyltransferase (753 aa).

The Mg(2+) site is built by Asp523 and Asp529. Positions 589 to 648 (PRIISVRIPVDKIGAVIGPKGAMINQIQDDTGADITIEDDGTVLIGATDGASAEAARSAV) constitute a KH domain. Residues 660–732 (GERYLGTVVK…DRGKLSLSPV (73 aa)) form the S1 motif domain. The disordered stretch occupies residues 733-753 (GAESDAVAETADAIESSQTEA).

This sequence belongs to the polyribonucleotide nucleotidyltransferase family. The cofactor is Mg(2+).

It localises to the cytoplasm. It carries out the reaction RNA(n+1) + phosphate = RNA(n) + a ribonucleoside 5'-diphosphate. Involved in mRNA degradation. Catalyzes the phosphorolysis of single-stranded polyribonucleotides processively in the 3'- to 5'-direction. The polypeptide is Polyribonucleotide nucleotidyltransferase (Micrococcus luteus (strain ATCC 4698 / DSM 20030 / JCM 1464 / CCM 169 / CCUG 5858 / IAM 1056 / NBRC 3333 / NCIMB 9278 / NCTC 2665 / VKM Ac-2230) (Micrococcus lysodeikticus)).